We begin with the raw amino-acid sequence, 530 residues long: Ubiquitin carboxyl-terminal hydrolase 17-like protein 21 (530 aa).

The USP domain occupies 80–375 (AGLQNMGNTC…QAYVLFYIQK (296 aa)). The active-site Nucleophile is cysteine 89. Histidine 334 functions as the Proton acceptor in the catalytic mechanism. Composition is skewed to basic and acidic residues over residues 382–392 (SESVSRGREPR) and 398–412 (DTDR…KRDH). Disordered regions lie at residues 382–412 (SESV…KRDH) and 477–530 (NHHP…LVCQ). Positions 493 to 505 (TPTHQESMNTGTL) are enriched in polar residues. Positions 510 to 524 (GRARRSKGKNKHSKR) are enriched in basic residues.

The protein belongs to the peptidase C19 family. USP17 subfamily.

It localises to the nucleus. Its subcellular location is the endoplasmic reticulum. It carries out the reaction Thiol-dependent hydrolysis of ester, thioester, amide, peptide and isopeptide bonds formed by the C-terminal Gly of ubiquitin (a 76-residue protein attached to proteins as an intracellular targeting signal).. Its function is as follows. Deubiquitinating enzyme that removes conjugated ubiquitin from specific proteins to regulate different cellular processes that may include cell proliferation, progression through the cell cycle, apoptosis, cell migration, and the cellular response to viral infection. In Homo sapiens (Human), this protein is Ubiquitin carboxyl-terminal hydrolase 17-like protein 21 (USP17L21).